The following is a 234-amino-acid chain: 1-(5-phosphoribosyl)-5-[(5-phosphoribosylamino)methylideneamino] imidazole-4-carboxamide isomerase (234 aa).

The active-site Proton acceptor is D9. The active-site Proton donor is the D131.

The protein belongs to the HisA/HisF family.

Its subcellular location is the cytoplasm. It carries out the reaction 1-(5-phospho-beta-D-ribosyl)-5-[(5-phospho-beta-D-ribosylamino)methylideneamino]imidazole-4-carboxamide = 5-[(5-phospho-1-deoxy-D-ribulos-1-ylimino)methylamino]-1-(5-phospho-beta-D-ribosyl)imidazole-4-carboxamide. It participates in amino-acid biosynthesis; L-histidine biosynthesis; L-histidine from 5-phospho-alpha-D-ribose 1-diphosphate: step 4/9. This Staphylococcus aureus (strain bovine RF122 / ET3-1) protein is 1-(5-phosphoribosyl)-5-[(5-phosphoribosylamino)methylideneamino] imidazole-4-carboxamide isomerase.